The following is a 294-amino-acid chain: Basic endochitinase (294 aa).

The N-terminal stretch at 1 to 24 is a signal peptide; it reads MNIKVSLLFILPIFLLLLTSKVKA. A GH18 domain is found at 25–294; the sequence is GDIVVYWGQD…GYSSAIRGAV (270 aa). 2 disulfide bridges follow: Cys-44/Cys-91 and Cys-74/Cys-81. The active-site Proton donor is the Glu-151. A disulfide bond links Cys-182 and Cys-211.

Belongs to the glycosyl hydrolase 18 family. Chitinase class II subfamily.

The catalysed reaction is Random endo-hydrolysis of N-acetyl-beta-D-glucosaminide (1-&gt;4)-beta-linkages in chitin and chitodextrins.. Its function is as follows. This protein functions as a defense against chitin containing fungal pathogens. The sequence is that of Basic endochitinase from Nicotiana tabacum (Common tobacco).